Consider the following 72-residue polypeptide: Protein SlyX homolog (72 aa).

Residues 53-72 form a disordered region; the sequence is KDISPSNIRREEEETPPPHY.

It belongs to the SlyX family.

In Marinobacter nauticus (strain ATCC 700491 / DSM 11845 / VT8) (Marinobacter aquaeolei), this protein is Protein SlyX homolog.